The chain runs to 1027 residues: Error-prone DNA polymerase (1027 aa).

The protein belongs to the DNA polymerase type-C family. DnaE2 subfamily.

Its subcellular location is the cytoplasm. The enzyme catalyses DNA(n) + a 2'-deoxyribonucleoside 5'-triphosphate = DNA(n+1) + diphosphate. Its function is as follows. DNA polymerase involved in damage-induced mutagenesis and translesion synthesis (TLS). It is not the major replicative DNA polymerase. The sequence is that of Error-prone DNA polymerase from Dechloromonas aromatica (strain RCB).